A 261-amino-acid chain; its full sequence is tRNA(His) guanylyltransferase (261 aa).

Aspartate 29, glycine 30, and aspartate 76 together coordinate Mg(2+). GTP contacts are provided by residues 29–34 and 75–76; these read DGKGFH and SD.

The protein belongs to the tRNA(His) guanylyltransferase family. Mg(2+) is required as a cofactor.

It catalyses the reaction a 5'-end ribonucleotide-tRNA(His) + GTP + ATP + H2O = a 5'-end phospho-guanosine-ribonucleotide-tRNA(His) + AMP + 2 diphosphate + H(+). Functionally, adds a GMP to the 5'-end of tRNA(His) after transcription and RNase P cleavage. The chain is tRNA(His) guanylyltransferase (thg1) from Schizosaccharomyces pombe (strain 972 / ATCC 24843) (Fission yeast).